The sequence spans 142 residues: Hemoglobin subunit alpha (142 aa).

The Globin domain maps to 2-142; that stretch reads VLSSADKNNV…VSTVLTSKYR (141 aa). Serine 4 is modified (phosphoserine). Lysine 8 and lysine 12 each carry N6-succinyllysine. Position 17 is an N6-acetyllysine; alternate (lysine 17). The residue at position 17 (lysine 17) is an N6-succinyllysine; alternate. Tyrosine 25 carries the phosphotyrosine modification. Residue serine 36 is modified to Phosphoserine. Position 41 is an N6-succinyllysine (lysine 41). Serine 50 is modified (phosphoserine). Histidine 59 provides a ligand contact to O2. Histidine 88 contributes to the heme b binding site. Phosphoserine is present on serine 103. A Phosphothreonine modification is found at threonine 109. Serine 125 is modified (phosphoserine). Residues threonine 135 and threonine 138 each carry the phosphothreonine modification. Serine 139 carries the post-translational modification Phosphoserine.

It belongs to the globin family. As to quaternary structure, heterotetramer of two alpha chains and two beta chains. Red blood cells.

Functionally, involved in oxygen transport from the lung to the various peripheral tissues. Its function is as follows. Hemopressin acts as an antagonist peptide of the cannabinoid receptor CNR1. Hemopressin-binding efficiently blocks cannabinoid receptor CNR1 and subsequent signaling. The chain is Hemoglobin subunit alpha (HBA) from Panthera onca (Jaguar).